The sequence spans 101 residues: Small ribosomal subunit protein uS14 (101 aa).

This sequence belongs to the universal ribosomal protein uS14 family. As to quaternary structure, part of the 30S ribosomal subunit. Contacts proteins S3 and S10.

In terms of biological role, binds 16S rRNA, required for the assembly of 30S particles and may also be responsible for determining the conformation of the 16S rRNA at the A site. This chain is Small ribosomal subunit protein uS14, found in Arthrobacter sp. (strain FB24).